Consider the following 251-residue polypeptide: Putative ATP-binding protein Rv3427c in insertion sequence (251 aa).

108–115 contributes to the ATP binding site; it reads GPVGVGKT.

Belongs to the IS21/IS1162 putative ATP-binding protein family.

This Mycobacterium tuberculosis (strain ATCC 25618 / H37Rv) protein is Putative ATP-binding protein Rv3427c in insertion sequence.